The primary structure comprises 397 residues: Phosphoglycerate kinase (397 aa).

Substrate contacts are provided by residues 21–23 (DFN), R37, 60–63 (HLGR), R119, and R152. Residues K203, G294, E325, and 354-357 (GGDS) contribute to the ATP site.

This sequence belongs to the phosphoglycerate kinase family. In terms of assembly, monomer.

It localises to the cytoplasm. The catalysed reaction is (2R)-3-phosphoglycerate + ATP = (2R)-3-phospho-glyceroyl phosphate + ADP. It functions in the pathway carbohydrate degradation; glycolysis; pyruvate from D-glyceraldehyde 3-phosphate: step 2/5. In Chlorobium phaeobacteroides (strain DSM 266 / SMG 266 / 2430), this protein is Phosphoglycerate kinase.